The primary structure comprises 193 residues: Glycerol-3-phosphate acyltransferase (193 aa).

The next 5 membrane-spanning stretches (helical) occupy residues 4–24 (LALI…AVLI), 56–76 (GLVL…GYFL), 80–100 (PLLL…PLFF), 116–136 (APIG…IVLI), and 152–174 (PLFT…CLIV).

The protein belongs to the PlsY family. Probably interacts with PlsX.

The protein resides in the cell inner membrane. It catalyses the reaction an acyl phosphate + sn-glycerol 3-phosphate = a 1-acyl-sn-glycero-3-phosphate + phosphate. Its pathway is lipid metabolism; phospholipid metabolism. In terms of biological role, catalyzes the transfer of an acyl group from acyl-phosphate (acyl-PO(4)) to glycerol-3-phosphate (G3P) to form lysophosphatidic acid (LPA). This enzyme utilizes acyl-phosphate as fatty acyl donor, but not acyl-CoA or acyl-ACP. The protein is Glycerol-3-phosphate acyltransferase of Aliivibrio salmonicida (strain LFI1238) (Vibrio salmonicida (strain LFI1238)).